The chain runs to 453 residues: HTH-type pyridoxine biosynthesis transcriptional regulator PdxR (453 aa).

Residues Thr-15–Asp-83 form the HTH gntR-type domain. The segment at residues Ser-43–Asp-62 is a DNA-binding region (H-T-H motif).

In the C-terminal section; belongs to the class-I pyridoxal-phosphate-dependent aminotransferase family. It depends on pyridoxal 5'-phosphate as a cofactor.

May have a regulatory function in pyridoxine biosynthesis. Is said to also have an aminotransferase activity in valine biosynthesis as a double inactivation of ilvE and pdxR results in an auxotrophic requirement for valine. The sequence is that of HTH-type pyridoxine biosynthesis transcriptional regulator PdxR (pdxR) from Corynebacterium glutamicum (strain ATCC 13032 / DSM 20300 / JCM 1318 / BCRC 11384 / CCUG 27702 / LMG 3730 / NBRC 12168 / NCIMB 10025 / NRRL B-2784 / 534).